We begin with the raw amino-acid sequence, 89 residues long: Large ribosomal subunit protein eL34 (89 aa).

Residues 1–32 (MPAPRFKSGSFKKISKRGPGNKTLTHHRRSKV) are disordered.

Belongs to the eukaryotic ribosomal protein eL34 family.

The sequence is that of Large ribosomal subunit protein eL34 from Methanococcus aeolicus (strain ATCC BAA-1280 / DSM 17508 / OCM 812 / Nankai-3).